A 109-amino-acid chain; its full sequence is Large ribosomal subunit protein uL24 (109 aa).

This sequence belongs to the universal ribosomal protein uL24 family. Part of the 50S ribosomal subunit.

In terms of biological role, one of two assembly initiator proteins, it binds directly to the 5'-end of the 23S rRNA, where it nucleates assembly of the 50S subunit. Functionally, one of the proteins that surrounds the polypeptide exit tunnel on the outside of the subunit. The chain is Large ribosomal subunit protein uL24 from Legionella pneumophila subsp. pneumophila (strain Philadelphia 1 / ATCC 33152 / DSM 7513).